Reading from the N-terminus, the 231-residue chain is Dihydropteridine reductase (231 aa).

NADP(+) is bound at residue 6-30 (LVLGGSGALGAEVVKFFKSKSWNTI). Residue Y138 is the Proton acceptor of the active site.

It belongs to the short-chain dehydrogenases/reductases (SDR) family. As to quaternary structure, homodimer.

The catalysed reaction is 5,6,7,8-tetrahydropteridine + NAD(+) = 6,7-dihydropteridine + NADH + H(+). It carries out the reaction 5,6,7,8-tetrahydropteridine + NADP(+) = 6,7-dihydropteridine + NADPH + H(+). The product of this enzyme, tetrahydrobiopterin (BH-4), is an essential cofactor for phenylalanine, tyrosine, and tryptophan hydroxylases. This chain is Dihydropteridine reductase (qdpr), found in Dictyostelium discoideum (Social amoeba).